The sequence spans 175 residues: UPF0398 protein SGO_0588 (175 aa).

The protein belongs to the UPF0398 family.

The chain is UPF0398 protein SGO_0588 from Streptococcus gordonii (strain Challis / ATCC 35105 / BCRC 15272 / CH1 / DL1 / V288).